A 460-amino-acid chain; its full sequence is Argininosuccinate lyase (460 aa).

It belongs to the lyase 1 family. Argininosuccinate lyase subfamily.

Its subcellular location is the cytoplasm. The enzyme catalyses 2-(N(omega)-L-arginino)succinate = fumarate + L-arginine. Its pathway is amino-acid biosynthesis; L-arginine biosynthesis; L-arginine from L-ornithine and carbamoyl phosphate: step 3/3. This chain is Argininosuccinate lyase, found in Leuconostoc mesenteroides subsp. mesenteroides (strain ATCC 8293 / DSM 20343 / BCRC 11652 / CCM 1803 / JCM 6124 / NCDO 523 / NBRC 100496 / NCIMB 8023 / NCTC 12954 / NRRL B-1118 / 37Y).